We begin with the raw amino-acid sequence, 229 residues long: uncharacterized protein (229 aa).

Residues Q2 to P69 form the S4 RNA-binding domain. Residue D102 is the Nucleophile of the active site.

This sequence belongs to the pseudouridine synthase RsuA family.

It catalyses the reaction a uridine in RNA = a pseudouridine in RNA. This is an uncharacterized protein from Rickettsia felis (strain ATCC VR-1525 / URRWXCal2) (Rickettsia azadi).